A 314-amino-acid chain; its full sequence is Ribosomal protein L11 methyltransferase (314 aa).

The S-adenosyl-L-methionine site is built by threonine 161, glycine 182, aspartate 204, and asparagine 248.

Belongs to the methyltransferase superfamily. PrmA family.

Its subcellular location is the cytoplasm. It carries out the reaction L-lysyl-[protein] + 3 S-adenosyl-L-methionine = N(6),N(6),N(6)-trimethyl-L-lysyl-[protein] + 3 S-adenosyl-L-homocysteine + 3 H(+). Functionally, methylates ribosomal protein L11. The polypeptide is Ribosomal protein L11 methyltransferase (Listeria monocytogenes serotype 4b (strain CLIP80459)).